A 153-amino-acid polypeptide reads, in one-letter code: UPF0743 protein YCR087C-A (153 aa).

2 C2HC LYAR-type zinc fingers span residues 1–26 (MVTF…YRCP) and 27–52 (NAYY…TSCI). Zn(2+) contacts are provided by Cys6, Cys9, His21, Cys25, Cys32, Cys35, His48, and Cys51. The interval 63–96 (YKGNKKQKQKQQQKQQQKQHQHQPVATPAKKVEK) is disordered. Residues 65-83 (GNKKQKQKQQQKQQQKQHQ) show a composition bias toward basic residues.

The protein belongs to the UPF0743 family.

The protein localises to the nucleus. It is found in the nucleolus. The chain is UPF0743 protein YCR087C-A from Saccharomyces cerevisiae (strain ATCC 204508 / S288c) (Baker's yeast).